Here is a 179-residue protein sequence, read N- to C-terminus: Peptidyl-tRNA hydrolase 2, mitochondrial (179 aa).

The helical transmembrane segment at 10-32 (YLTNPGALSLAAGVACGVCLGWG) threads the bilayer. Glycyl lysine isopeptide (Lys-Gly) (interchain with G-Cter in ubiquitin) cross-links involve residues lysine 76, lysine 81, lysine 95, lysine 106, lysine 115, lysine 171, and lysine 177.

This sequence belongs to the PTH2 family. As to quaternary structure, monomer. Post-translationally, ubiquitinated by PRKN during mitophagy, leading to its degradation and enhancement of mitophagy. Deubiquitinated by USP30.

The protein resides in the mitochondrion outer membrane. It carries out the reaction an N-acyl-L-alpha-aminoacyl-tRNA + H2O = an N-acyl-L-amino acid + a tRNA + H(+). Functionally, peptidyl-tRNA hydrolase which releases tRNAs from the ribosome during protein synthesis. Promotes caspase-independent apoptosis by regulating the function of two transcriptional regulators, AES and TLE1. The polypeptide is Peptidyl-tRNA hydrolase 2, mitochondrial (PTRH2) (Bos taurus (Bovine)).